A 253-amino-acid chain; its full sequence is Trans-aconitate 2-methyltransferase (253 aa).

Belongs to the methyltransferase superfamily. Tam family.

The protein localises to the cytoplasm. It catalyses the reaction trans-aconitate + S-adenosyl-L-methionine = (E)-3-(methoxycarbonyl)pent-2-enedioate + S-adenosyl-L-homocysteine. Catalyzes the S-adenosylmethionine monomethyl esterification of trans-aconitate. This Klebsiella pneumoniae (strain 342) protein is Trans-aconitate 2-methyltransferase.